The primary structure comprises 745 residues: Mediator of RNA polymerase II transcription subunit 25 (745 aa).

Residues 1–226 (MVPGSEGPAR…PRHMVLVRGL (226 aa)) are interaction with the Mediator complex. Polar residues predominate over residues 233–243 (SSTSGSLQTKQ). 2 disordered regions span residues 233–266 (SSTS…QALP) and 299–374 (LGPR…VTPG). Residues 252–262 (ASAATLSAAPP) show a composition bias toward low complexity. Residues 324–342 (PAPPLAPVPPGAPKPPPAS) show a composition bias toward pro residues. The tract at residues 389–543 (LGGQQSVSNK…VNGIRQVITN (155 aa)) is interaction with VP16. Residues 395–545 (VSNKLLAWSG…GIRQVITNHK (151 aa)) form an interaction with CREBBP region. 2 interaction with RARA regions span residues 563 to 652 (APPV…LLNP) and 639 to 705 (PGAN…WPTQ). Residues 584 to 738 (LRAPQPQPQG…PGLQPSVMED (155 aa)) are disordered. The segment covering 596–617 (GASAATGQPQPQGATQAPTGAP) has biased composition (low complexity). Positions 618–631 (QGPPGAAPGPPPSG) are enriched in pro residues. An LXXLL motif motif is present at residues 645 to 649 (LRSLL). Residues 652–663 (PAPPQTGVPPPQ) are compositionally biased toward pro residues. Arg-723 bears the Asymmetric dimethylarginine mark.

This sequence belongs to the Mediator complex subunit 25 family. In terms of assembly, component of the Mediator complex, which is composed of MED1, MED4, MED6, MED7, MED8, MED9, MED10, MED11, MED12, MED13, MED13L, MED14, MED15, MED16, MED17, MED18, MED19, MED20, MED21, MED22, MED23, MED24, MED25, MED26, MED27, MED29, MED30, MED31, CCNC, CDK8 and CDC2L6/CDK11. The MED12, MED13, CCNC and CDK8 subunits form a distinct module termed the CDK8 module. Mediator containing the CDK8 module is less active than Mediator lacking this module in supporting transcriptional activation. Individual preparations of the Mediator complex lacking one or more distinct subunits have been variously termed ARC, CRSP, DRIP, PC2, SMCC and TRAP. Interacts with CREBBP. Interacts with ESR1, GR and THRB in a ligand-dependent fashion. Binds the Herpes simplex virus activator VP16. Interacts with RARA and RXRA in a ligand-dependent fashion.

The protein resides in the nucleus. Component of the Mediator complex, a coactivator involved in the regulated transcription of nearly all RNA polymerase II-dependent genes. Mediator functions as a bridge to convey information from gene-specific regulatory proteins to the basal RNA polymerase II transcription machinery. Mediator is recruited to promoters by direct interactions with regulatory proteins and serves as a scaffold for the assembly of a functional preinitiation complex with RNA polymerase II and the general transcription factors. Required for RARA/RXRA-mediated transcription. This is Mediator of RNA polymerase II transcription subunit 25 (Med25) from Mus musculus (Mouse).